The primary structure comprises 134 residues: Citrolysin protein 2 (134 aa).

The polypeptide is Citrolysin protein 2 (Citrobacter freundii).